Consider the following 476-residue polypeptide: MAEGKSGAGLFAKQVQKHFSRAQEKVLQKLGKTVETKDEQFEQSAYNFQLQQNEGNKLYKDLKAFVGAVKVMHESSRKVAETLQEIYSTEWDGHVELKAIADSNDLLWDDYEAKLGDQALRLMENYLAQFGDIKERIAKRGRKLVDYDSARHHLEALQNAKKKDEAKIAKAEEEFNRAQVVFEELNRELREELPVLYGSRIACYVTIFQNISNLRDIFYKEMSKLNRDLYEVMGKLDKQHSSKVFIIKGVPSKRRSLLISAPVSPPAAYPCPGKAPNWEPSSGAEQTPTSPRVGSDATEDVPNGLAAPGPAEPGAPMPGPPPASPTSVRSASESESECSGESREIDLSPKEMEVSAGSGCPEYPKTEGAAKGEVEGIAASMASMIVSEAIAAATGAAPGDSDGVGGGDSTDSEISPAEGAWGGPSPGGSEERVEGTDVSPEVGSDAGPCEHGTPEPPEQDVSCNPPQDPSESLTPL.

Positions 26–242 (VLQKLGKTVE…MGKLDKQHSS (217 aa)) constitute a BAR domain. 2 disordered regions span residues 269–369 (YPCP…TEGA) and 395–476 (GAAP…LTPL). The segment covering 279–292 (EPSSGAEQTPTSPR) has biased composition (polar residues). Pro residues predominate over residues 310–324 (PAEPGAPMPGPPPAS). The span at 325-339 (PTSVRSASESESECS) shows a compositional bias: low complexity. The segment covering 340-353 (GESREIDLSPKEME) has biased composition (basic and acidic residues). The span at 461–476 (VSCNPPQDPSESLTPL) shows a compositional bias: polar residues.

The protein localises to the cytoplasm. The sequence is that of Bridging integrator 2 (BIN2) from Gallus gallus (Chicken).